The following is a 175-amino-acid chain: MDKLADLNYTLSVITSMNDTLHSIIQDPGMAYFLYIASVLTVLFTLHKASIPTMKIALKTSKCSYKVIKYCIVTIINTLLKLAGYKEQVTTKDEIEQQMDRIVKEMRRQLEMIDKLTTREIEQVELLKRIHDNLITRPVDVIDMSKEFNQKNIKTLDEWESGKNPYEPSEVTASM.

The Lumenal segment spans residues 1–28 (MDKLADLNYTLSVITSMNDTLHSIIQDP). 2 N-linked (GlcNAc...) asparagine; by host glycosylation sites follow: Asn8 and Asn18. A helical; Signal-anchor for type III membrane protein transmembrane segment spans residues 29–51 (GMAYFLYIASVLTVLFTLHKASI). Over 52–175 (PTMKIALKTS…YEPSEVTASM (124 aa)) the chain is Cytoplasmic. Positions 120 and 123 each coordinate Ca(2+).

Belongs to the rotavirus NSP4 family. In terms of assembly, homotetramer. Interacts with the immature particle in the viroplasm. Interacts with host CAV1, early and late in infection. Interacts with host integrin ITGA1/ITGB1 heterodimer. Interacts with host integrin ITGA2/ITGB1 heterodimer. Interaction with microtubules blocks trafficking to the Golgi apparatus. In terms of processing, the N-glycosyl content is primarily Man(9)GlcNAc, with a small amount of Man(8)GlcNAc.

It is found in the host rough endoplasmic reticulum membrane. The protein localises to the host membrane. Its subcellular location is the host caveola. It localises to the secreted. In terms of biological role, plays an essential role in the virus replication cycle by acting as a viroporin. Creates a pore in the host endoplasmic reticulum and as a consequence releases Ca(2+) in the cytoplasm of infected cell. In turn, high levels of cytoplasmic calcium trigger membrane trafficking and transport of viral ER-associated proteins to viroplasms, sites of viral genome replication and immature particle assembly. Functionally, the secreted form acts as an enterotoxin that causes phospholipase C-dependent elevation of the intracellular calcium concentration in host intestinal mucosa cells. Increased concentration of intracellular calcium disrupts the cytoskeleton and the tight junctions, raising the paracellular permeability. Potentiates chloride ion secretion through a calcium ion-dependent signaling pathway, inducing age-dependent diarrhea. To perform this enterotoxigenic role in vivo, NSP4 is released from infected enterocytes in a soluble form capable of diffusing within the intestinal lumen and interacting with host plasma membrane receptors on neighboring epithelial cells such as integrins ITGA1/ITGB1 and ITGA2/ITGB1. In Rotavirus A (strain RVA/Human/United States/Wa/1974/G1P1A[8]) (RV-A), this protein is Non-structural glycoprotein 4.